The sequence spans 1380 residues: Carboxypeptidase D (1380 aa).

The first 31 residues, 1 to 31, serve as a signal peptide directing secretion; it reads MASGRDERPPWRLGRLLLLMCLLLLGSSARA. Over 32 to 1299 the chain is Extracellular; that stretch reads AHIKKAEATT…DNRIFGLPRE (1268 aa). Residues 57–380 form the Peptidase M14 1 domain; sequence RYYHEEELES…ESLITLIEKV (324 aa). Zn(2+)-binding residues include histidine 139 and glutamate 142. The short motif at 162–164 is the Cell attachment site element; that stretch reads RGD. Asparagine 172 carries an N-linked (GlcNAc...) asparagine glycan. Residues 190-232 are disordered; the sequence is AREGDCGFGDGGPSGASGRDNSRGRDLNRSFPDQFSTGEPPAL. Positions 195–204 are enriched in gly residues; the sequence is CGFGDGGPSG. N-linked (GlcNAc...) asparagine glycosylation occurs at asparagine 217. Histidine 257 lines the Zn(2+) pocket. At tyrosine 265 the chain carries Phosphotyrosine. The residue at position 270 (serine 270) is a Phosphoserine. The active-site Proton donor/acceptor is the glutamate 350. N-linked (GlcNAc...) asparagine glycans are attached at residues asparagine 399, asparagine 410, asparagine 429, and asparagine 522. Residues 502–792 enclose the Peptidase M14 2 domain; sequence HHHHFPDMEI…RSLIQFMKQV (291 aa). Histidine 564 and glutamate 567 together coordinate Zn(2+). Asparagine 626 carries an N-linked (GlcNAc...) asparagine glycan. Histidine 671 lines the Zn(2+) pocket. Residue glutamate 762 is the Proton donor/acceptor of the active site. Residues asparagine 811, asparagine 855, asparagine 867, and asparagine 879 are each glycosylated (N-linked (GlcNAc...) asparagine). A disordered region spans residues 874–899; sequence STDSNNESKKGKGASSSTNDASDPTT. The span at 887–897 shows a compositional bias: polar residues; that stretch reads ASSSTNDASDP. In terms of domain architecture, Peptidase M14 3 spans 932 to 1211; sequence RYHSYKDLSE…RSLLSMLVEV (280 aa). Residues asparagine 955, asparagine 978, asparagine 1070, and asparagine 1142 are each glycosylated (N-linked (GlcNAc...) asparagine). Residues 1300 to 1320 form a helical membrane-spanning segment; the sequence is LVVTVSGATMSALILTACIIW. S-palmitoyl cysteine attachment occurs at residues cysteine 1317, cysteine 1321, and cysteine 1323. The Cytoplasmic portion of the chain corresponds to 1321-1380; the sequence is CICSIKSNRHKDGFHRLRQHHDEYEDEIRMMSTGSKKSLLSHEFQDETDTEEETLYSSKH. Residues serine 1358 and serine 1361 each carry the phosphoserine modification. The segment at 1359–1380 is disordered; it reads LLSHEFQDETDTEEETLYSSKH. Threonine 1368 and threonine 1370 each carry phosphothreonine.

It belongs to the peptidase M14 family. Zn(2+) serves as cofactor. In terms of tissue distribution, highly expressed in placenta, pancreas and hepatoma cells. Lower levels found in skeletal muscle, heart and colon carcinoma and melanoma cell lines.

The protein resides in the cell membrane. The catalysed reaction is Releases C-terminal Arg and Lys from polypeptides.. This Homo sapiens (Human) protein is Carboxypeptidase D (CPD).